We begin with the raw amino-acid sequence, 349 residues long: UDP-3-O-acylglucosamine N-acyltransferase (349 aa).

His240 serves as the catalytic Proton acceptor.

Belongs to the transferase hexapeptide repeat family. LpxD subfamily. As to quaternary structure, homotrimer.

The enzyme catalyses a UDP-3-O-[(3R)-3-hydroxyacyl]-alpha-D-glucosamine + a (3R)-hydroxyacyl-[ACP] = a UDP-2-N,3-O-bis[(3R)-3-hydroxyacyl]-alpha-D-glucosamine + holo-[ACP] + H(+). The protein operates within bacterial outer membrane biogenesis; LPS lipid A biosynthesis. Catalyzes the N-acylation of UDP-3-O-acylglucosamine using 3-hydroxyacyl-ACP as the acyl donor. Is involved in the biosynthesis of lipid A, a phosphorylated glycolipid that anchors the lipopolysaccharide to the outer membrane of the cell. In Porphyromonas gingivalis (strain ATCC BAA-308 / W83), this protein is UDP-3-O-acylglucosamine N-acyltransferase.